The following is a 149-amino-acid chain: Transcriptional repressor NrdR (149 aa).

A zinc finger spans residues 3-34 (CPFCSHPETQVVETRVAEDGDFVRRRRQCGAC). The ATP-cone domain occupies 49 to 139 (PNVVKKDGRR…VYRNFEDIDE (91 aa)).

It belongs to the NrdR family. Requires Zn(2+) as cofactor.

Negatively regulates transcription of bacterial ribonucleotide reductase nrd genes and operons by binding to NrdR-boxes. In Paracidovorax citrulli (strain AAC00-1) (Acidovorax citrulli), this protein is Transcriptional repressor NrdR.